The sequence spans 420 residues: Anaerobic glycerol-3-phosphate dehydrogenase subunit B (420 aa).

Belongs to the anaerobic G-3-P dehydrogenase subunit B family. Composed of a catalytic GlpA/B dimer and of membrane bound GlpC. It depends on FMN as a cofactor.

It carries out the reaction a quinone + sn-glycerol 3-phosphate = dihydroxyacetone phosphate + a quinol. It functions in the pathway polyol metabolism; glycerol degradation via glycerol kinase pathway; glycerone phosphate from sn-glycerol 3-phosphate (anaerobic route): step 1/1. In terms of biological role, conversion of glycerol 3-phosphate to dihydroxyacetone. Uses fumarate or nitrate as electron acceptor. The protein is Anaerobic glycerol-3-phosphate dehydrogenase subunit B of Pectobacterium carotovorum subsp. carotovorum (strain PC1).